We begin with the raw amino-acid sequence, 108 residues long: Ig kappa chain V-V region MOPC 173 (108 aa).

Residues 1–23 (DIQMTQTTSSLSASLGDRVTISC) form a framework-1 region. Cysteines 23 and 88 form a disulfide. The interval 24–34 (SASQSIGNYLB) is complementarity-determining-1. The segment at 35–49 (WYQQKPDGTVKLLIY) is framework-2. A complementarity-determining-2 region spans residues 50–56 (YTSSLHS). Residues 57 to 88 (GVPSRFSGSGSGTDYSLTISBLZPZBIATYYC) form a framework-3 region. The interval 89-97 (QQYSKLPRT) is complementarity-determining-3. The segment at 98-108 (FGGGTKLEIKR) is framework-4.

The protein is Ig kappa chain V-V region MOPC 173 of Mus musculus (Mouse).